Here is a 357-residue protein sequence, read N- to C-terminus: Nicotinate-nucleotide--dimethylbenzimidazole phosphoribosyltransferase (357 aa).

Glu323 acts as the Proton acceptor in catalysis.

Belongs to the CobT family.

It catalyses the reaction 5,6-dimethylbenzimidazole + nicotinate beta-D-ribonucleotide = alpha-ribazole 5'-phosphate + nicotinate + H(+). Its pathway is nucleoside biosynthesis; alpha-ribazole biosynthesis; alpha-ribazole from 5,6-dimethylbenzimidazole: step 1/2. In terms of biological role, catalyzes the synthesis of alpha-ribazole-5'-phosphate from nicotinate mononucleotide (NAMN) and 5,6-dimethylbenzimidazole (DMB). The sequence is that of Nicotinate-nucleotide--dimethylbenzimidazole phosphoribosyltransferase from Nitratidesulfovibrio vulgaris (strain ATCC 29579 / DSM 644 / CCUG 34227 / NCIMB 8303 / VKM B-1760 / Hildenborough) (Desulfovibrio vulgaris).